We begin with the raw amino-acid sequence, 616 residues long: uncharacterized protein (616 aa).

This is an uncharacterized protein from Methanocaldococcus jannaschii (strain ATCC 43067 / DSM 2661 / JAL-1 / JCM 10045 / NBRC 100440) (Methanococcus jannaschii).